A 413-amino-acid chain; its full sequence is Elongation factor 1-alpha (413 aa).

GTP contacts are provided by residues 1 to 7 (HVDSGKS), 77 to 81 (DAPGH), and 139 to 142 (NKMD). The 228-residue stretch at 1 to 228 (HVDSGKSTTT…DAILPPARPT (228 aa)) folds into the tr-type G domain. 5-glutamyl glycerylphosphorylethanolamine is present on residues Glu287 and Glu360.

This sequence belongs to the TRAFAC class translation factor GTPase superfamily. Classic translation factor GTPase family. EF-Tu/EF-1A subfamily.

The protein localises to the cytoplasm. Functionally, this protein promotes the GTP-dependent binding of aminoacyl-tRNA to the A-site of ribosomes during protein biosynthesis. In Heliocheilus albipunctella (Millet head miner), this protein is Elongation factor 1-alpha.